Reading from the N-terminus, the 124-residue chain is Small ribosomal subunit protein eS6 (124 aa).

Belongs to the eukaryotic ribosomal protein eS6 family.

This Methanococcus maripaludis (strain DSM 14266 / JCM 13030 / NBRC 101832 / S2 / LL) protein is Small ribosomal subunit protein eS6.